Consider the following 791-residue polypeptide: Endonuclease MutS2 (791 aa).

339–346 is a binding site for ATP; sequence GPNTGGKT. The Smr domain occupies 715-790; that stretch reads LDLRGERYET…GSGVTIADLK (76 aa).

This sequence belongs to the DNA mismatch repair MutS family. MutS2 subfamily. Homodimer. Binds to stalled ribosomes, contacting rRNA.

Functionally, endonuclease that is involved in the suppression of homologous recombination and thus may have a key role in the control of bacterial genetic diversity. Acts as a ribosome collision sensor, splitting the ribosome into its 2 subunits. Detects stalled/collided 70S ribosomes which it binds and splits by an ATP-hydrolysis driven conformational change. Acts upstream of the ribosome quality control system (RQC), a ribosome-associated complex that mediates the extraction of incompletely synthesized nascent chains from stalled ribosomes and their subsequent degradation. Probably generates substrates for RQC. This is Endonuclease MutS2 from Halothermothrix orenii (strain H 168 / OCM 544 / DSM 9562).